An 831-amino-acid chain; its full sequence is Prolactin receptor (831 aa).

A signal peptide spans 1-23; it reads MKQNLISSVQIILLLPLTTVGLT. Over 24-438 the chain is Extracellular; it reads SQSFPGKPKI…EIPNDFRVKD (415 aa). Fibronectin type-III domains follow at residues 30–128, 129–232, 233–331, and 332–433; these read KPKI…VQPG, SPVN…SPPE, KPTI…VQPD, and PPAN…IPND. Cysteines 36 and 46 form a disulfide. N-linked (GlcNAc...) asparagine glycosylation occurs at asparagine 59. A disulfide bridge links cysteine 75 with cysteine 86. N-linked (GlcNAc...) asparagine glycans are attached at residues asparagine 91, asparagine 100, asparagine 112, asparagine 132, asparagine 262, asparagine 303, asparagine 315, and asparagine 335. Zn(2+) contacts are provided by aspartate 414 and histidine 416. The short motif at 419 to 423 is the WSXWS motif element; that stretch reads WSEWS. The helical transmembrane segment at 439 to 459 threads the bilayer; that stretch reads MIVWIVLGVLSSLICLIMSWT. Residues 460-831 are Cytoplasmic-facing; sequence MVLKGYRMIT…DPSSFMPSFK (372 aa). Residues 471 to 479 carry the Box 1 motif motif; that stretch reads ILPPVPGPK. 2 disordered regions span residues 527–563 and 776–831; these read HQLMPSHDSGRPSKNAKITLKETDRDSGRGSCDSPSL and HTPT…PSFK. Residues 545 to 554 show a composition bias toward basic and acidic residues; that stretch reads TLKETDRDSG. The span at 777 to 803 shows a compositional bias: polar residues; the sequence is TPTSQEEPAKETSQNPQQGQVETNMSY.

It belongs to the type I cytokine receptor family. Type 1 subfamily.

It localises to the membrane. Its function is as follows. This is a receptor for the anterior pituitary hormone prolactin. This chain is Prolactin receptor (PRLR), found in Meleagris gallopavo (Wild turkey).